Reading from the N-terminus, the 585-residue chain is Zinc finger protein 614 (585 aa).

Residues 8-79 (LTLEDVAVEF…DAKIQNKNCP (72 aa)) enclose the KRAB domain. The C2H2-type 1; atypical zinc-finger motif lies at 205–227 (HACIECEQTFLRKSQLIYHENIC). Residues 257–281 (KICIPNEYRKGSTVKSSLITHQQTH) form a C2H2-type 2; degenerate zinc finger. 10 C2H2-type zinc fingers span residues 287–309 (YMCSECGKGFTMKRYLIAHQRTH), 315–337 (YVCKECGKGFTVKSNLIVHQRTH), 343–365 (YICSECGKGFTMKRYLVVHQRTH), 371–393 (YMCSECGKGFTVKSNLIVHQRSH), 399–421 (YICSECGKGFTVKRTLVIHQRTH), 427–449 (YICNECGKGFTTKRTLIIHQRTH), 455–477 (YECNECGKAFSQKICLIQHERCH), 483–505 (FVCTECGKSYSHKYGLITHQRIH), 511–533 (YECNECGKAFTTKSVLNVHQRTH), and 539–561 (YGCSDCEKAFSHLSNLVKHKKMH).

It belongs to the krueppel C2H2-type zinc-finger protein family.

The protein resides in the nucleus. In terms of biological role, may be involved in transcriptional regulation. This is Zinc finger protein 614 (ZNF614) from Homo sapiens (Human).